We begin with the raw amino-acid sequence, 208 residues long: Outer-membrane lipoprotein carrier protein (208 aa).

A signal peptide spans 1–21 (MRLIRTLFVAALAMGASLAHA).

It belongs to the LolA family. As to quaternary structure, monomer.

The protein localises to the periplasm. Participates in the translocation of lipoproteins from the inner membrane to the outer membrane. Only forms a complex with a lipoprotein if the residue after the N-terminal Cys is not an aspartate (The Asp acts as a targeting signal to indicate that the lipoprotein should stay in the inner membrane). In Pseudomonas aeruginosa (strain UCBPP-PA14), this protein is Outer-membrane lipoprotein carrier protein.